Reading from the N-terminus, the 187-residue chain is UPF0301 protein Pcryo_0062 (187 aa).

It belongs to the UPF0301 (AlgH) family.

This is UPF0301 protein Pcryo_0062 from Psychrobacter cryohalolentis (strain ATCC BAA-1226 / DSM 17306 / VKM B-2378 / K5).